Here is a 274-residue protein sequence, read N- to C-terminus: Ribosomal RNA small subunit methyltransferase A (274 aa).

Residues His15, Leu17, Gly42, Glu64, Asp89, and Asn109 each coordinate S-adenosyl-L-methionine.

This sequence belongs to the class I-like SAM-binding methyltransferase superfamily. rRNA adenine N(6)-methyltransferase family. RsmA subfamily.

It localises to the cytoplasm. It carries out the reaction adenosine(1518)/adenosine(1519) in 16S rRNA + 4 S-adenosyl-L-methionine = N(6)-dimethyladenosine(1518)/N(6)-dimethyladenosine(1519) in 16S rRNA + 4 S-adenosyl-L-homocysteine + 4 H(+). In terms of biological role, specifically dimethylates two adjacent adenosines (A1518 and A1519) in the loop of a conserved hairpin near the 3'-end of 16S rRNA in the 30S particle. May play a critical role in biogenesis of 30S subunits. This Synechococcus sp. (strain CC9605) protein is Ribosomal RNA small subunit methyltransferase A.